The sequence spans 335 residues: Ornithine carbamoyltransferase (335 aa).

Carbamoyl phosphate-binding positions include 60-63 (STRT), Q87, R111, and 138-141 (HPTQ). Residues N171, D235, and 239–240 (SM) each bind L-ornithine. Residues 277-278 (CL) and R322 each bind carbamoyl phosphate.

This sequence belongs to the aspartate/ornithine carbamoyltransferase superfamily. OTCase family.

It is found in the cytoplasm. The catalysed reaction is carbamoyl phosphate + L-ornithine = L-citrulline + phosphate + H(+). It functions in the pathway amino-acid biosynthesis; L-arginine biosynthesis; L-arginine from L-ornithine and carbamoyl phosphate: step 1/3. Functionally, reversibly catalyzes the transfer of the carbamoyl group from carbamoyl phosphate (CP) to the N(epsilon) atom of ornithine (ORN) to produce L-citrulline. The protein is Ornithine carbamoyltransferase of Streptomyces avermitilis (strain ATCC 31267 / DSM 46492 / JCM 5070 / NBRC 14893 / NCIMB 12804 / NRRL 8165 / MA-4680).